The primary structure comprises 153 residues: Regulator of sigma D (153 aa).

It belongs to the Rsd/AlgQ family. Interacts with RpoD.

It localises to the cytoplasm. In terms of biological role, binds RpoD and negatively regulates RpoD-mediated transcription activation by preventing the interaction between the primary sigma factor RpoD with the catalytic core of the RNA polymerase and with promoter DNA. May be involved in replacement of the RNA polymerase sigma subunit from RpoD to RpoS during the transition from exponential growth to the stationary phase. The chain is Regulator of sigma D from Pectobacterium carotovorum subsp. carotovorum (strain PC1).